The chain runs to 1116 residues: Ubiquitin C-terminal hydrolase 12 (1116 aa).

Positions 1 to 10 are enriched in pro residues; sequence MTMMTPPPVD. The interval 1–52 is disordered; the sequence is MTMMTPPPVDQPEDEEMLVPNSDLVDGPAQPMEVTQPETAASTVENQPAEDP. Polar residues predominate over residues 36–46; that stretch reads QPETAASTVEN. An MATH domain is found at 54–179; it reads TLKFTWTIPN…NDTVLVEAEV (126 aa). Residues 199-524 enclose the USP domain; the sequence is VGLKNQGATC…NAYMLVYIRE (326 aa). The active-site Nucleophile is the cysteine 208. Histidine 455 (proton acceptor) is an active-site residue.

The protein belongs to the peptidase C19 family. In terms of assembly, interacts with SIC/RON3.

The enzyme catalyses Thiol-dependent hydrolysis of ester, thioester, amide, peptide and isopeptide bonds formed by the C-terminal Gly of ubiquitin (a 76-residue protein attached to proteins as an intracellular targeting signal).. Its function is as follows. Recognizes and hydrolyzes the peptide bond at the C-terminal Gly of ubiquitin. Involved in the processing of poly-ubiquitin precursors as well as that of ubiquitinated proteins. Positive regulator of root meristem development that, together with UBP13, prevents the ubiquitination and turnover of RGFR1 induced by the RGF1 hormone peptide, thus influencing PLT1 and PLT2 expression. In Arabidopsis thaliana (Mouse-ear cress), this protein is Ubiquitin C-terminal hydrolase 12.